A 235-amino-acid polypeptide reads, in one-letter code: UPF0758 protein COPRO5265_1522 (235 aa).

In terms of domain architecture, MPN spans 109–235 (RITTPEDAIE…HVSLAREKLI (127 aa)). Zn(2+) contacts are provided by H184, H186, and D197. Positions 184-197 (HNHPSGDPSPSRED) match the JAMM motif motif.

It belongs to the UPF0758 family.

This is UPF0758 protein COPRO5265_1522 from Coprothermobacter proteolyticus (strain ATCC 35245 / DSM 5265 / OCM 4 / BT).